The sequence spans 183 residues: Adenine phosphoribosyltransferase (183 aa).

It belongs to the purine/pyrimidine phosphoribosyltransferase family. Homodimer.

Its subcellular location is the cytoplasm. It catalyses the reaction AMP + diphosphate = 5-phospho-alpha-D-ribose 1-diphosphate + adenine. Its pathway is purine metabolism; AMP biosynthesis via salvage pathway; AMP from adenine: step 1/1. Catalyzes a salvage reaction resulting in the formation of AMP, that is energically less costly than de novo synthesis. The protein is Adenine phosphoribosyltransferase of Klebsiella pneumoniae (strain 342).